Consider the following 99-residue polypeptide: Malonate decarboxylase acyl carrier protein (99 aa).

Serine 25 is subject to O-(phosphoribosyl dephospho-coenzyme A)serine.

Belongs to the MdcC family. Covalently binds the prosthetic group of malonate decarboxylase.

Its subcellular location is the cytoplasm. Its function is as follows. Subunit of malonate decarboxylase, it is an acyl carrier protein to which acetyl and malonyl thioester residues are bound via a 2'-(5''-phosphoribosyl)-3'-dephospho-CoA prosthetic group and turn over during the catalytic mechanism. The sequence is that of Malonate decarboxylase acyl carrier protein from Pseudomonas aeruginosa (strain UCBPP-PA14).